The sequence spans 1597 residues: Glucosyltransferase-I (1597 aa).

The signal sequence occupies residues 1–38 (MEKNERFKMHKVKKRWVTISVASATMLASALGASVASA). The interval 52–120 (LTADQTTTNQ…QTTTNANEAK (69 aa)) is disordered. Low complexity predominate over residues 53–114 (TADQTTTNQD…STDTAAQTTT (62 aa)). Cell wall-binding repeat units lie at residues 157–176 (MSNV…DGNV) and 178–197 (KNFA…TGAY). The catalytic; approximate stretch occupies residues 200 to 1050 (TSKVEADKSG…DQASNKYLNV (851 aa)). Cell wall-binding repeat units follow at residues 1089–1108 (TDSF…DGYM), 1109–1128 (VTGA…NGAA), 1130–1150 (RNTV…DGKR), 1152–1172 (ENGY…GVMA), 1173–1191 (LGLT…DGVQ), 1193–1214 (KDKI…NGNA), 1216–1236 (TNTF…DGVA), 1237–1256 (VTGA…NGQQ), 1258–1279 (KGDF…SGDM), 1281–1301 (TNTF…DGAA), 1302–1321 (VTGA…NGQQ), 1323–1343 (KGDI…QTGE), 1344–1365 (QVFN…DGTA), 1366–1380 (QTQA…KDGS), 1415–1434 (LTGA…NGHQ), 1436–1457 (KGQL…SGDQ), 1459–1478 (FNKS…DGTA), 1485–1505 (KGQT…EGQY), 1508–1527 (GSGW…DGKV), 1528–1547 (LTGL…NGIQ), 1549–1570 (KGKA…SGSM), and 1572–1591 (TNQW…DGAA). The tract at residues 1099–1597 (LYYFGQDGYM…DGAAVYRGWN (499 aa)) is glucan-binding; approximate.

This sequence belongs to the glycosyl hydrolase 70 family.

The protein resides in the secreted. The enzyme catalyses [(1-&gt;6)-alpha-D-glucosyl](n) + sucrose = [(1-&gt;6)-alpha-D-glucosyl](n+1) + D-fructose. In terms of biological role, production of extracellular glucans, that are thought to play a key role in the development of the dental plaque because of their ability to adhere to smooth surfaces and mediate the aggregation of bacterial cells and food debris. This Streptococcus downei (Streptococcus sobrinus) protein is Glucosyltransferase-I (gtfI).